The sequence spans 167 residues: Minor fimbrial protein PrsF (167 aa).

The signal sequence occupies residues 1 to 18; the sequence is MIRLSLFISLLLTSVAVL.

Its subcellular location is the secreted. The protein localises to the fimbrium. In terms of biological role, fimbriae (also called pili), polar filaments radiating from the surface of the bacterium to a length of 0.5-1.5 micrometers and numbering 100-300 per cell, enable bacteria to colonize the epithelium of specific host organs. The protein is Minor fimbrial protein PrsF (prsF) of Escherichia coli.